Reading from the N-terminus, the 572-residue chain is Arginine--tRNA ligase (572 aa).

Positions 122–132 (PNLAKEMHVGH) match the 'HIGH' region motif.

This sequence belongs to the class-I aminoacyl-tRNA synthetase family. In terms of assembly, monomer.

The protein resides in the cytoplasm. The catalysed reaction is tRNA(Arg) + L-arginine + ATP = L-arginyl-tRNA(Arg) + AMP + diphosphate. This Neisseria gonorrhoeae (strain NCCP11945) protein is Arginine--tRNA ligase.